Here is a 67-residue protein sequence, read N- to C-terminus: Peptide Hp1239 (67 aa).

The N-terminal stretch at 1 to 23 (MKTQFTVLLITLVLFQMLSQSEA) is a signal peptide. Phenylalanine 36 is subject to Phenylalanine amide. The propeptide occupies 40–67 (GLSDLSDLDELFDGEITKADLDLLREIM).

Belongs to the non-disulfide-bridged peptide (NDBP) superfamily. Short antimicrobial peptide (group 4) family. As to expression, expressed by the venom gland.

The protein resides in the secreted. It localises to the target cell membrane. Amphipathic peptide with antibacterial activities. Shows antiviral activities against the herpes simplex virus type-1. It potently inhibits the initial infection by provoking the rupture of viral envelop and the dissociation of proteins from the virions (EC(50) is 0.41 uM). It also effectively inhibits viral attachment (EC(50) is 5.73 uM), viral entry (EC(50) is 4.32 uM) and viral proliferation after infection (EC(50) is 8.41 uM). Morever, it enters mammalian tested cells (Vero) and reduces the intracellular infectivity. In Heterometrus petersii (Asian forest scorpion), this protein is Peptide Hp1239.